The sequence spans 49 residues: Large ribosomal subunit protein bL33 (49 aa).

It belongs to the bacterial ribosomal protein bL33 family.

This chain is Large ribosomal subunit protein bL33, found in Desulforamulus reducens (strain ATCC BAA-1160 / DSM 100696 / MI-1) (Desulfotomaculum reducens).